The following is a 198-amino-acid chain: Holliday junction branch migration complex subunit RuvA (198 aa).

A domain I region spans residues 1–63; sequence MYDYIKGQLT…EDAHLLFGFH (63 aa). The interval 64-142 is domain II; the sequence is TEDEKDVFLK…EAPQETGHTK (79 aa). Positions 143 to 147 are flexible linker; the sequence is ARSNK. The domain III stretch occupies residues 148-198; it reads AGNTQLDEAIEALLALGYKAKELKKIRAFFEETSETAEQYIKSALKLLMKG.

The protein belongs to the RuvA family. As to quaternary structure, homotetramer. Forms an RuvA(8)-RuvB(12)-Holliday junction (HJ) complex. HJ DNA is sandwiched between 2 RuvA tetramers; dsDNA enters through RuvA and exits via RuvB. An RuvB hexamer assembles on each DNA strand where it exits the tetramer. Each RuvB hexamer is contacted by two RuvA subunits (via domain III) on 2 adjacent RuvB subunits; this complex drives branch migration. In the full resolvosome a probable DNA-RuvA(4)-RuvB(12)-RuvC(2) complex forms which resolves the HJ.

The protein localises to the cytoplasm. The RuvA-RuvB-RuvC complex processes Holliday junction (HJ) DNA during genetic recombination and DNA repair, while the RuvA-RuvB complex plays an important role in the rescue of blocked DNA replication forks via replication fork reversal (RFR). RuvA specifically binds to HJ cruciform DNA, conferring on it an open structure. The RuvB hexamer acts as an ATP-dependent pump, pulling dsDNA into and through the RuvAB complex. HJ branch migration allows RuvC to scan DNA until it finds its consensus sequence, where it cleaves and resolves the cruciform DNA. The chain is Holliday junction branch migration complex subunit RuvA from Streptococcus pyogenes serotype M2 (strain MGAS10270).